An 816-amino-acid polypeptide reads, in one-letter code: MGGGDISHMSPEVKWIFEMAWYGETVRYDGLICEEHPPKLSSDGIWEKLIIKSAGLYFWQYRLPKLEIVILLVFFLWQGFNILFKKLGLSIPKLSSMMLAGLLLNVLVTLSGENSIIADILVTKNRIDVAGCLGSFGFLIFWFLKGVRMDVKRIFKAEAKARVTGVAAVTFPIVVGFLLFNLKSAKNRPLTFQEYDVMLLMESITSFSGIARLLRDLGMNHSSIGRVALSSALVSDIVGLLLLIANVSRSSATLADGLAILTEITLFLVIAFAVVRPIMFKIIKRKGEGRPIEDKYIHGVLVLVCLSCMYWEDLSQFPPLGAFFLGLAIPNGPPIGSALVERLESFNFGIILPLFLTAVMLRTDTTAWKGALTFFSGDDKKFAVASLVLLIFLLKLSVSVIVPYLYKMPLRDSIILALIMSHKGIIELSFYLFSLSLKLVTKDTFSILVLSIVLNSLLIPMAIGFLYDPSKQFICYQKRNLASMKNMGELKTLVCIHRPDHISSMINLLEASYQSEDSPLTCYVLHLVELRGQDVPTLISHKVQKLGVGAGNKYSENVILSFEHFHRSVCSSISIDTFTCIANANHMQDDICWLALDKAVTLIILPFHRTWSLDRTSIVSDVEAIRFLNVNVLKQAPCSVGILIERHLVNKKQEPHESLKVCVIFVGGKDDREALAFAKRMARQENVTLTVLRLLASGKSKDATGWDQMLDTVELRELIKSNNAGMVKEETSTIYLEQEILDGADTSMLLRSMAFDYDLFVVGRTCGENHEATKGIENWCEFEELGVIGDFLASPDFPSKTSVLVVQQQRTVANNN.

Helical transmembrane passes span 64-84 (PKLEIVILLVFFLWQGFNILF), 97-117 (MMLAGLLLNVLVTLSGENSII), 127-147 (IDVAGCLGSFGFLIFWFLKGV), 163-183 (VTGVAAVTFPIVVGFLLFNLK), 197-214 (VMLLMESITSFSGIARLL), 227-247 (VALSSALVSDIVGLLLLIANV), 255-275 (ADGLAILTEITLFLVIAFAVV), 297-317 (IHGVLVLVCLSCMYWEDLSQF), 343-363 (LESFNFGIILPLFLTAVMLRT), 382-402 (FAVASLVLLIFLLKLSVSVIV), 413-433 (SIILALIMSHKGIIELSFYLF), and 447-467 (ILVLSIVLNSLLIPMAIGFLY).

It belongs to the monovalent cation:proton antiporter 2 (CPA2) transporter (TC 2.A.37) family. CHX (TC 2.A.37.4) subfamily. Specifically expressed in pollen.

Its subcellular location is the membrane. Functionally, may operate as a cation/H(+) antiporter. This chain is Cation/H(+) antiporter 8 (CHX8), found in Arabidopsis thaliana (Mouse-ear cress).